The following is a 367-amino-acid chain: Peptide chain release factor 2 (367 aa).

Gln249 is subject to N5-methylglutamine.

This sequence belongs to the prokaryotic/mitochondrial release factor family. Post-translationally, methylated by PrmC. Methylation increases the termination efficiency of RF2.

It is found in the cytoplasm. Functionally, peptide chain release factor 2 directs the termination of translation in response to the peptide chain termination codons UGA and UAA. This chain is Peptide chain release factor 2, found in Thermotoga sp. (strain RQ2).